We begin with the raw amino-acid sequence, 878 residues long: Pyruvate, phosphate dikinase (878 aa).

Residues 1-347 (MKKLIYYFGS…LYILQTRTAK (347 aa)) are N-terminal. Arginine 96 contributes to the ATP binding site. The linker 1 stretch occupies residues 348–404 (RTAIAAIKIAVQMVEEKLISKEQALMRIDPESLNQLLHTRIDYSKGLTSIADGLPAS). Residues 405–502 (PGAATGIIVF…ILKQDDIITI (98 aa)) form a central region. Threonine 457 carries the post-translational modification Phosphothreonine; by PDRP1. Catalysis depends on histidine 459, which acts as the Tele-phosphohistidine intermediate. Residues 503 to 537 (DGGTGKVFLGAVPLIQPTFSEESKLILEWADETSK) form a linker 2 region. The C-terminal stretch occupies residues 538–878 (LKIRTNAETV…AAAQAKIKHG (341 aa)). Substrate contacts are provided by arginine 565, arginine 621, glutamate 749, glycine 770, threonine 771, asparagine 772, and aspartate 773. Glutamate 749 serves as a coordination point for Mg(2+). Aspartate 773 serves as a coordination point for Mg(2+). Cysteine 835 (proton donor) is an active-site residue.

The protein belongs to the PEP-utilizing enzyme family. Homodimer. Mg(2+) is required as a cofactor. In terms of processing, phosphorylation of Thr-457 in the dark inactivates the enzyme. Dephosphorylation upon light stimulation reactivates the enzyme.

It catalyses the reaction pyruvate + phosphate + ATP = phosphoenolpyruvate + AMP + diphosphate + H(+). Its activity is regulated as follows. Activated by light-induced dephosphorylation. Inhibited by dark-induced phosphorylation. Both reactions are catalyzed by PDRP1. Functionally, catalyzes the reversible phosphorylation of pyruvate and phosphate. In Rickettsia bellii (strain RML369-C), this protein is Pyruvate, phosphate dikinase (ppdK).